The sequence spans 244 residues: ATP synthase subunit a, chloroplastic (244 aa).

The next 5 helical transmembrane spans lie at glutamine 35–valine 55, valine 92–leucine 112, isoleucine 131–serine 151, leucine 196–leucine 216, and glycine 217–glycine 237.

It belongs to the ATPase A chain family. As to quaternary structure, F-type ATPases have 2 components, CF(1) - the catalytic core - and CF(0) - the membrane proton channel. CF(1) has five subunits: alpha(3), beta(3), gamma(1), delta(1), epsilon(1). CF(0) has four main subunits: a, b, b' and c.

It is found in the plastid. It localises to the chloroplast thylakoid membrane. Functionally, key component of the proton channel; it plays a direct role in the translocation of protons across the membrane. The polypeptide is ATP synthase subunit a, chloroplastic (Gossypium barbadense (Sea Island cotton)).